The following is a 733-amino-acid chain: 1,4-alpha-glucan branching enzyme GlgB (733 aa).

The Nucleophile role is filled by aspartate 409. Glutamate 462 acts as the Proton donor in catalysis.

It belongs to the glycosyl hydrolase 13 family. GlgB subfamily. As to quaternary structure, monomer.

It carries out the reaction Transfers a segment of a (1-&gt;4)-alpha-D-glucan chain to a primary hydroxy group in a similar glucan chain.. It participates in glycan biosynthesis; glycogen biosynthesis. Functionally, catalyzes the formation of the alpha-1,6-glucosidic linkages in glycogen by scission of a 1,4-alpha-linked oligosaccharide from growing alpha-1,4-glucan chains and the subsequent attachment of the oligosaccharide to the alpha-1,6 position. This Gloeobacter violaceus (strain ATCC 29082 / PCC 7421) protein is 1,4-alpha-glucan branching enzyme GlgB.